Reading from the N-terminus, the 139-residue chain is Flagellar basal body rod protein FlgB (139 aa).

Belongs to the flagella basal body rod proteins family. The basal body constitutes a major portion of the flagellar organelle and consists of a number of rings mounted on a central rod. In Gram-negative bacteria, at least four rings, L, P, S and M are present, whereas Gram-positive bacteria lack the L and P rings. The rod consists of about 26 subunits of FlgG in the distal portion, and FlgB, FlgC and FlgF build up the proximal portion of the rod with about 6 subunits each. Rod assembly occurs by export via the flagellum-specific pathway of its constituent proteins and by their incorporation into the rod structure in the probable order of FlgB, FlgC, FlgF and FlgG. Another protein, FliE, also assembles onto the stable rod structure.

It is found in the bacterial flagellum basal body. Structural component of flagellum, the bacterial motility apparatus. Part of the rod structure of flagellar basal body. This is Flagellar basal body rod protein FlgB from Proteus mirabilis.